An 842-amino-acid chain; its full sequence is Type VI secretion system spike protein VgrG2a (842 aa).

Positions 265-291 (RSGAGRPFSESRLRGHRRDARVASVSG) are disordered.

Belongs to the VgrG protein family.

In terms of biological role, part of the H2 type VI secretion system (H2-T6SS) specialized secretion system, which delivers several virulence factors in both prokaryotic and eukaryotic cells during infection. May form the spike at the tip of the elongating tube formed by haemolysin co-regulated protein 2a/Hcp2a. In turn, may allow the delivery of the Tle4 antibacterial toxin to target cells where it exerts its toxicity. Also promotes the release of VgrG2b toxin to the host cell. This is Type VI secretion system spike protein VgrG2a from Pseudomonas aeruginosa (strain ATCC 15692 / DSM 22644 / CIP 104116 / JCM 14847 / LMG 12228 / 1C / PRS 101 / PAO1).